Consider the following 308-residue polypeptide: Acetylglutamate kinase (308 aa).

Residues 67–68 (GG), arginine 89, and asparagine 193 each bind substrate.

Belongs to the acetylglutamate kinase family. ArgB subfamily.

It is found in the cytoplasm. It catalyses the reaction N-acetyl-L-glutamate + ATP = N-acetyl-L-glutamyl 5-phosphate + ADP. The protein operates within amino-acid biosynthesis; L-arginine biosynthesis; N(2)-acetyl-L-ornithine from L-glutamate: step 2/4. Its function is as follows. Catalyzes the ATP-dependent phosphorylation of N-acetyl-L-glutamate. This chain is Acetylglutamate kinase, found in Nitratidesulfovibrio vulgaris (strain DP4) (Desulfovibrio vulgaris).